The primary structure comprises 449 residues: Lysine-sensitive aspartokinase 3 (449 aa).

Residues 2–245 (SEIVVSKFGG…AAKRIDEIAF (244 aa)) form an aspartokinase region. 8-11 (KFGG) lines the ATP pocket. Residues threonine 45, glutamate 119, and 198–201 (RGGS) each bind substrate. Residues 221–222 (TD), tyrosine 227, arginine 232, and 257–258 (KV) each bind ATP. The tract at residues 246-449 (AEAAEMATFG…VQKLHSNLFE (204 aa)) is interface. Residues 299–449 (FRALALRRNQ…VQKLHSNLFE (151 aa)) form a required for homodimerization region. One can recognise an ACT domain in the interval 313 to 394 (LHSLNMLHSR…GLALVALIGN (82 aa)). Residues methionine 318, serine 321, 324-325 (FL), 338-340 (SVD), and 345-346 (SE) each bind L-lysine.

The protein belongs to the aspartokinase family. Homodimer. In the inactive form a homotetramer is formed.

The enzyme catalyses L-aspartate + ATP = 4-phospho-L-aspartate + ADP. Its pathway is amino-acid biosynthesis; L-lysine biosynthesis via DAP pathway; (S)-tetrahydrodipicolinate from L-aspartate: step 1/4. With respect to regulation, synthesis and activity are sensitive to the allosteric inhibitor lysine, one of the end metabolites of the aspartic acid family branched pathway. The protein is Lysine-sensitive aspartokinase 3 (lysC) of Escherichia coli (strain K12).